Reading from the N-terminus, the 178-residue chain is ATP synthase subunit b (178 aa).

The helical transmembrane segment at 19-39 threads the bilayer; the sequence is ITGIGFVILLFIAIKYIVPAF.

It belongs to the ATPase B chain family. In terms of assembly, F-type ATPases have 2 components, F(1) - the catalytic core - and F(0) - the membrane proton channel. F(1) has five subunits: alpha(3), beta(3), gamma(1), delta(1), epsilon(1). F(0) has three main subunits: a(1), b(2) and c(10-14). The alpha and beta chains form an alternating ring which encloses part of the gamma chain. F(1) is attached to F(0) by a central stalk formed by the gamma and epsilon chains, while a peripheral stalk is formed by the delta and b chains.

The protein resides in the cell membrane. In terms of biological role, f(1)F(0) ATP synthase produces ATP from ADP in the presence of a proton or sodium gradient. F-type ATPases consist of two structural domains, F(1) containing the extramembraneous catalytic core and F(0) containing the membrane proton channel, linked together by a central stalk and a peripheral stalk. During catalysis, ATP synthesis in the catalytic domain of F(1) is coupled via a rotary mechanism of the central stalk subunits to proton translocation. Component of the F(0) channel, it forms part of the peripheral stalk, linking F(1) to F(0). The sequence is that of ATP synthase subunit b from Kocuria rhizophila (strain ATCC 9341 / DSM 348 / NBRC 103217 / DC2201).